The primary structure comprises 617 residues: Translation initiation factor IF-2 (617 aa).

Over residues 1-11 (MSKHKPRHFQK) the composition is skewed to basic residues. A disordered region spans residues 1 to 25 (MSKHKPRHFQKNKFDNRAKTSAKQQ). Residues 119–288 (PRPPIVTIMG…ILLVAEVEDY (170 aa)) enclose the tr-type G domain. A G1 region spans residues 128–135 (GHVDHGKT). 128–135 (GHVDHGKT) is a GTP binding site. The interval 153–157 (GITQK) is G2. The segment at 175-178 (DTPG) is G3. GTP is bound by residues 175–179 (DTPGH) and 229–232 (NKMD). A G4 region spans residues 229-232 (NKMD). Positions 265–267 (SAL) are G5.

The protein belongs to the TRAFAC class translation factor GTPase superfamily. Classic translation factor GTPase family. IF-2 subfamily.

It is found in the cytoplasm. Functionally, one of the essential components for the initiation of protein synthesis. Protects formylmethionyl-tRNA from spontaneous hydrolysis and promotes its binding to the 30S ribosomal subunits. Also involved in the hydrolysis of GTP during the formation of the 70S ribosomal complex. In Mycoplasma pneumoniae (strain ATCC 29342 / M129 / Subtype 1) (Mycoplasmoides pneumoniae), this protein is Translation initiation factor IF-2 (infB).